The sequence spans 188 residues: Der GTPase-activating protein YihI (188 aa).

Disordered regions lie at residues 1 to 80 (MKQP…VPVP) and 162 to 188 (DEDDVEREEKQEDILQLLKRGNPKDTF). Residues 27–37 (TRDELDAEARD) are compositionally biased toward basic and acidic residues. The span at 47 to 57 (NRSGARTNVEG) shows a compositional bias: polar residues.

The protein belongs to the YihI family. As to quaternary structure, interacts with Der.

Functionally, a GTPase-activating protein (GAP) that modifies Der/EngA GTPase function. May play a role in ribosome biogenesis. This Yersinia pseudotuberculosis serotype O:3 (strain YPIII) protein is Der GTPase-activating protein YihI.